A 567-amino-acid chain; its full sequence is Myo-inositol transporter 1 (567 aa).

Topologically, residues 1–88 (MSARPAQPNI…KFVWMLVSAA (88 aa)) are cytoplasmic. The disordered stretch occupies residues 14-42 (IRTSLSGYPSPTHSGSSTPASLEFSDGRL). A compositionally biased stretch (polar residues) spans 16–33 (TSLSGYPSPTHSGSSTPA). Residues 89–109 (AISGLLFGYDTAAISGMLVII) form a helical membrane-spanning segment. At 110 to 123 (KDDLGTILSSWQKE) the chain is on the extracellular side. Residues 124-144 (VITSATTLGALLGGLAAGCVS) form a helical membrane-spanning segment. Over 145-150 (DFTGRR) the chain is Cytoplasmic. The helical transmembrane segment at 151-171 (LVIVFANVAFIGGSICQAACH) threads the bilayer. At 172–180 (TVAAMIAGR) the chain is on the extracellular side. The helical transmembrane segment at 181–201 (FIVGLGVGLASCIVPLYIGEL) threads the bilayer. Residues 202-209 (APTMIRGR) are Cytoplasmic-facing. The chain crosses the membrane as a helical span at residues 210 to 230 (LVTINCVAVTLGQVVAYAIGA). Residues 231-240 (SFQNVHNGWR) are Extracellular-facing. A helical membrane pass occupies residues 241–261 (WIVGLGAMPSFVQLAAIGFLP). The Cytoplasmic segment spans residues 262–343 (ESPRILLLRS…IGCGLQAAQQ (82 aa)). The helical transmembrane segment at 344–364 (LCGFNTLMYYSATIFAMLGFN) threads the bilayer. Asparagine 365 is a glycosylation site (N-linked (GlcNAc...) asparagine). The Extracellular segment spans residues 365-367 (NAT). The helical transmembrane segment at 368–388 (AVGLIVATVNVLFTLVALKIV) threads the bilayer. Residues 389–397 (DPVGRRRTM) lie on the Cytoplasmic side of the membrane. A helical transmembrane segment spans residues 398–418 (LFTLPIMILALVFAAIFFYYL). Over 419-435 (TLSTNGILIEDHDYPRS) the chain is Extracellular. A helical transmembrane segment spans residues 436-456 (LSILVLLSMLLYVAGYATGLG). Residues 457–476 (NIPWQQGELFRLEVRGIGTS) are Cytoplasmic-facing. The chain crosses the membrane as a helical span at residues 477–497 (ICTAVNWSCNMLIAGTFLSLM). Residues 498–503 (DAATPS) are Extracellular-facing. A helical membrane pass occupies residues 504–524 (GAFGIYAGFCVIGWVFCWMLY). The Cytoplasmic segment spans residues 525 to 567 (PETSGLSLEEVYFVFEEGFGIKKSQQLRKQKLVEAAKLKAIFE).

Belongs to the major facilitator superfamily. Sugar transporter (TC 2.A.1.1) family.

It localises to the cell membrane. It catalyses the reaction myo-inositol(out) + H(+)(out) = myo-inositol(in) + H(+)(in). Its function is as follows. May function as a transporter or as a sensor for myo-inositol. This Cryptococcus neoformans var. grubii serotype A (strain H99 / ATCC 208821 / CBS 10515 / FGSC 9487) (Filobasidiella neoformans var. grubii) protein is Myo-inositol transporter 1.